An 896-amino-acid polypeptide reads, in one-letter code: Probable DNA-directed RNA polymerase (896 aa).

Residues Asp-546, Lys-617, and Asp-798 contribute to the active site.

It belongs to the phage and mitochondrial RNA polymerase family.

It is found in the mitochondrion. The catalysed reaction is RNA(n) + a ribonucleoside 5'-triphosphate = RNA(n+1) + diphosphate. Its function is as follows. DNA-dependent RNA polymerase catalyzes the transcription of DNA into RNA using the four ribonucleoside triphosphates as substrates. The chain is Probable DNA-directed RNA polymerase from Neurospora crassa.